The sequence spans 209 residues: Endonuclease III (209 aa).

Residues Arg108–Asn127 form the HhH domain. Positions 187, 194, 197, and 203 each coordinate [4Fe-4S] cluster.

It belongs to the Nth/MutY family. [4Fe-4S] cluster serves as cofactor.

It carries out the reaction 2'-deoxyribonucleotide-(2'-deoxyribose 5'-phosphate)-2'-deoxyribonucleotide-DNA = a 3'-end 2'-deoxyribonucleotide-(2,3-dehydro-2,3-deoxyribose 5'-phosphate)-DNA + a 5'-end 5'-phospho-2'-deoxyribonucleoside-DNA + H(+). Its function is as follows. DNA repair enzyme that has both DNA N-glycosylase activity and AP-lyase activity. The DNA N-glycosylase activity releases various damaged pyrimidines from DNA by cleaving the N-glycosidic bond, leaving an AP (apurinic/apyrimidinic) site. The AP-lyase activity cleaves the phosphodiester bond 3' to the AP site by a beta-elimination, leaving a 3'-terminal unsaturated sugar and a product with a terminal 5'-phosphate. This Buchnera aphidicola subsp. Schizaphis graminum (strain Sg) protein is Endonuclease III.